The sequence spans 80 residues: Putative ankyrin repeat protein RC0877 (80 aa).

Residues 6 to 46 form an ANK repeat; the sequence is SGGIPLHAVAKNVRCTSKDIKDYEIYKLLVSYGADINARVE.

This chain is Putative ankyrin repeat protein RC0877, found in Rickettsia conorii (strain ATCC VR-613 / Malish 7).